Consider the following 399-residue polypeptide: Methylthioribose kinase (399 aa).

Residues Asn-40, Lys-57, and 111–113 (EDL) contribute to the ATP site. A substrate-binding site is contributed by Asp-229. An ATP-binding site is contributed by 246 to 248 (DAE). Residue Arg-344 coordinates substrate.

This sequence belongs to the methylthioribose kinase family. As to quaternary structure, homodimer.

The enzyme catalyses 5-(methylsulfanyl)-D-ribose + ATP = 5-(methylsulfanyl)-alpha-D-ribose 1-phosphate + ADP + H(+). It functions in the pathway amino-acid biosynthesis; L-methionine biosynthesis via salvage pathway; S-methyl-5-thio-alpha-D-ribose 1-phosphate from S-methyl-5'-thioadenosine (hydrolase route): step 2/2. Its function is as follows. Catalyzes the phosphorylation of methylthioribose into methylthioribose-1-phosphate. In Klebsiella pneumoniae (strain 342), this protein is Methylthioribose kinase.